Here is a 275-residue protein sequence, read N- to C-terminus: MGIRLYKAYTPGTRNRSISDFKELKNNKPEKSLTSSYHKKQGRNNRGIITIRHRGGGHKKLYRQIDFERNKFNIPGQVKSIEYDPNRNTRISLIHYEDGEKRYILAPRGLNIGDKIISSEEADITIGNTLPLTKIPLGTAIHNIEIKPGKGGQLVRSAGTVAQLIAKEGLVATIRLPSGEVRTIGKNCLATIGQLGNVDSNNRSFGKAGSKRWLGKKPTVRGVVMNPVDHPHGGGEGRAPIGRKRPLTPWGRPALGKKSRKNHKYSDAFIIRRRK.

The disordered stretch occupies residues Val224–His263.

It belongs to the universal ribosomal protein uL2 family. Part of the 50S ribosomal subunit.

It is found in the plastid. The protein resides in the chloroplast. This Chaetosphaeridium globosum (Charophycean green alga) protein is Large ribosomal subunit protein uL2c (rpl2).